The following is a 500-amino-acid chain: UDP-N-acetylmuramoyl-L-alanyl-D-glutamate--2,6-diaminopimelate ligase (500 aa).

UDP-N-acetyl-alpha-D-muramoyl-L-alanyl-D-glutamate contacts are provided by residues Leu26, Ser28, and 43–45 (HQV). 123 to 129 (GTNGKTT) provides a ligand contact to ATP. UDP-N-acetyl-alpha-D-muramoyl-L-alanyl-D-glutamate-binding positions include Asn164, 165–166 (TT), Ser192, Gln198, and Arg200. An N6-carboxylysine modification is found at Lys232. Meso-2,6-diaminopimelate-binding positions include Arg399, 423-426 (DNPR), Gly474, and Glu478. The Meso-diaminopimelate recognition motif signature appears at 423-426 (DNPR).

This sequence belongs to the MurCDEF family. MurE subfamily. Mg(2+) serves as cofactor. Carboxylation is probably crucial for Mg(2+) binding and, consequently, for the gamma-phosphate positioning of ATP.

The protein resides in the cytoplasm. It carries out the reaction UDP-N-acetyl-alpha-D-muramoyl-L-alanyl-D-glutamate + meso-2,6-diaminopimelate + ATP = UDP-N-acetyl-alpha-D-muramoyl-L-alanyl-gamma-D-glutamyl-meso-2,6-diaminopimelate + ADP + phosphate + H(+). The protein operates within cell wall biogenesis; peptidoglycan biosynthesis. In terms of biological role, catalyzes the addition of meso-diaminopimelic acid to the nucleotide precursor UDP-N-acetylmuramoyl-L-alanyl-D-glutamate (UMAG) in the biosynthesis of bacterial cell-wall peptidoglycan. This Actinobacillus pleuropneumoniae serotype 5b (strain L20) protein is UDP-N-acetylmuramoyl-L-alanyl-D-glutamate--2,6-diaminopimelate ligase.